The primary structure comprises 777 residues: Ribosome-releasing factor 2, mitochondrial (777 aa).

Positions 68–353 constitute a tr-type G domain; it reads AKIRNIGIMA…AITMYLPSPE (286 aa). GTP-binding positions include 77 to 84, 141 to 145, and 195 to 198; these read AHIDAGKT, DTPGH, and NKMD.

It belongs to the TRAFAC class translation factor GTPase superfamily. Classic translation factor GTPase family. EF-G/EF-2 subfamily.

The protein localises to the mitochondrion. It carries out the reaction GTP + H2O = GDP + phosphate + H(+). In terms of biological role, mitochondrial GTPase that mediates the disassembly of ribosomes from messenger RNA at the termination of mitochondrial protein biosynthesis. Acts in collaboration with MRRF. GTP hydrolysis follows the ribosome disassembly and probably occurs on the ribosome large subunit. Not involved in the GTP-dependent ribosomal translocation step during translation elongation. This is Ribosome-releasing factor 2, mitochondrial from Bos taurus (Bovine).